The sequence spans 59 residues: Large ribosomal subunit protein uL30 (59 aa).

This sequence belongs to the universal ribosomal protein uL30 family. As to quaternary structure, part of the 50S ribosomal subunit.

In Persephonella marina (strain DSM 14350 / EX-H1), this protein is Large ribosomal subunit protein uL30.